The primary structure comprises 394 residues: Guanine nucleotide-binding protein G(s) subunit alpha (394 aa).

Residues 1-23 (MGCLGNSKTEDQRNEEKAQREAN) are disordered. G2 carries the N-palmitoyl glycine lipid modification. The S-palmitoyl cysteine moiety is linked to residue C3. Residues 8-23 (KTEDQRNEEKAQREAN) show a composition bias toward basic and acidic residues. Residues 39-394 (ATHRLLLLGA…RMHLRQYELL (356 aa)) enclose the G-alpha domain. The tract at residues 42–55 (RLLLLGAGESGKST) is G1 motif. GTP is bound at residue 47 to 55 (GAGESGKST). S54 contacts Mg(2+). A disordered region spans residues 68–91 (FNGEGGEEDPQAARSNSDGEKATK). The tract at residues 196–204 (DLLRCRVLT) is G2 motif. Residues 197 to 204 (LLRCRVLT), 223 to 227 (DVGGQ), 292 to 295 (NKQD), and A366 contribute to the GTP site. T204 contributes to the Mg(2+) binding site. The G3 motif stretch occupies residues 219–228 (FHMFDVGGQR). Positions 288–295 (ILFLNKQD) are G4 motif. The G5 motif stretch occupies residues 364–369 (TCAVDT).

The protein belongs to the G-alpha family. G(s) subfamily. As to quaternary structure, heterotrimeric G proteins are composed of 3 units; alpha, beta and gamma. The alpha chain contains the guanine nucleotide binding site. Interacts with CRY1; the interaction may block GPCR-mediated regulation of cAMP concentrations. Interacts with ADCY6 and stimulates its adenylyl cyclase activity. Interacts with ADCY2 and ADCY5. Stimulates the ADCY5 adenylyl cyclase activity. Interaction with SASH1.

The protein localises to the cell membrane. Its function is as follows. Guanine nucleotide-binding proteins (G proteins) function as transducers in numerous signaling pathways controlled by G protein-coupled receptors (GPCRs). Signaling involves the activation of adenylyl cyclases, resulting in increased levels of the signaling molecule cAMP. GNAS functions downstream of several GPCRs, including beta-adrenergic receptors. Stimulates the Ras signaling pathway via RAPGEF2. The polypeptide is Guanine nucleotide-binding protein G(s) subunit alpha (GNAS) (Canis lupus familiaris (Dog)).